A 259-amino-acid chain; its full sequence is Pro-opiomelanocortin (259 aa).

The N-terminal stretch at 1-22 is a signal peptide; that stretch reads MLRSVWVYSLGLAVLLQQSGRE. Q23 is modified (pyrrolidone carboxylic acid). 2 cysteine pairs are disulfide-bonded: C24/C46 and C30/C42. The segment at 113 to 142 is disordered; it reads PQAEEEMEESESSQQQRREDKRSYSMEHFR. Over residues 128-142 the composition is skewed to basic and acidic residues; the sequence is QRREDKRSYSMEHFR. V147 carries the post-translational modification Valine amide.

The protein belongs to the POMC family. Specific enzymatic cleavages at paired basic residues yield the different active peptides.

The protein resides in the secreted. Stimulates the adrenal glands to release cortisol. Its function is as follows. Anorexigenic peptide. Increases the pigmentation of skin by increasing melanin production in melanocytes. In terms of biological role, increases the pigmentation of skin by increasing melanin production in melanocytes. Functionally, endogenous orexigenic opiate. Endogenous opiate. The chain is Pro-opiomelanocortin (pomc) from Lepisosteus osseus (Long-nosed gar).